A 189-amino-acid polypeptide reads, in one-letter code: Small ribosomal subunit protein uS7 (189 aa).

This sequence belongs to the universal ribosomal protein uS7 family. Part of the 30S ribosomal subunit.

Functionally, one of the primary rRNA binding proteins, it binds directly to 16S rRNA where it nucleates assembly of the head domain of the 30S subunit. Is located at the subunit interface close to the decoding center. In Methanosarcina acetivorans (strain ATCC 35395 / DSM 2834 / JCM 12185 / C2A), this protein is Small ribosomal subunit protein uS7.